The primary structure comprises 181 residues: Adenine phosphoribosyltransferase (181 aa).

This sequence belongs to the purine/pyrimidine phosphoribosyltransferase family. Homodimer.

The protein resides in the cytoplasm. The catalysed reaction is AMP + diphosphate = 5-phospho-alpha-D-ribose 1-diphosphate + adenine. It participates in purine metabolism; AMP biosynthesis via salvage pathway; AMP from adenine: step 1/1. In terms of biological role, catalyzes a salvage reaction resulting in the formation of AMP, that is energically less costly than de novo synthesis. The protein is Adenine phosphoribosyltransferase of Vibrio vulnificus (strain CMCP6).